Reading from the N-terminus, the 225-residue chain is Ribose-5-phosphate isomerase A (225 aa).

Substrate-binding positions include 33–36 (TGST), 86–89 (DGAD), and 99–102 (KGGG). E108 (proton acceptor) is an active-site residue. K126 provides a ligand contact to substrate.

Belongs to the ribose 5-phosphate isomerase family. Homodimer.

It carries out the reaction aldehydo-D-ribose 5-phosphate = D-ribulose 5-phosphate. The protein operates within carbohydrate degradation; pentose phosphate pathway; D-ribose 5-phosphate from D-ribulose 5-phosphate (non-oxidative stage): step 1/1. In terms of biological role, catalyzes the reversible conversion of ribose-5-phosphate to ribulose 5-phosphate. In Bordetella petrii (strain ATCC BAA-461 / DSM 12804 / CCUG 43448), this protein is Ribose-5-phosphate isomerase A.